The following is a 429-amino-acid chain: Adenylosuccinate synthetase (429 aa).

Residues Gly12–Lys18 and Gly40–Thr42 each bind GTP. Asp13 serves as the catalytic Proton acceptor. Mg(2+) is bound by residues Asp13 and Gly40. Residues Asp13–Lys16, Asn38–His41, Thr128, Arg142, Gln223, Thr238, and Arg302 each bind IMP. His41 (proton donor) is an active-site residue. Thr298–Arg304 lines the substrate pocket. GTP is bound by residues Arg304, Ser330–Asp332, and Ser412–Gly414.

The protein belongs to the adenylosuccinate synthetase family. In terms of assembly, homodimer. Mg(2+) is required as a cofactor.

Its subcellular location is the cytoplasm. It catalyses the reaction IMP + L-aspartate + GTP = N(6)-(1,2-dicarboxyethyl)-AMP + GDP + phosphate + 2 H(+). It participates in purine metabolism; AMP biosynthesis via de novo pathway; AMP from IMP: step 1/2. Plays an important role in the de novo pathway of purine nucleotide biosynthesis. Catalyzes the first committed step in the biosynthesis of AMP from IMP. This Bacillus cytotoxicus (strain DSM 22905 / CIP 110041 / 391-98 / NVH 391-98) protein is Adenylosuccinate synthetase.